A 282-amino-acid chain; its full sequence is ATP phosphoribosyltransferase (282 aa).

The protein belongs to the ATP phosphoribosyltransferase family. Long subfamily. Requires Mg(2+) as cofactor.

Its subcellular location is the cytoplasm. The catalysed reaction is 1-(5-phospho-beta-D-ribosyl)-ATP + diphosphate = 5-phospho-alpha-D-ribose 1-diphosphate + ATP. The protein operates within amino-acid biosynthesis; L-histidine biosynthesis; L-histidine from 5-phospho-alpha-D-ribose 1-diphosphate: step 1/9. With respect to regulation, feedback inhibited by histidine. In terms of biological role, catalyzes the condensation of ATP and 5-phosphoribose 1-diphosphate to form N'-(5'-phosphoribosyl)-ATP (PR-ATP). Has a crucial role in the pathway because the rate of histidine biosynthesis seems to be controlled primarily by regulation of HisG enzymatic activity. In Micrococcus luteus (strain ATCC 4698 / DSM 20030 / JCM 1464 / CCM 169 / CCUG 5858 / IAM 1056 / NBRC 3333 / NCIMB 9278 / NCTC 2665 / VKM Ac-2230) (Micrococcus lysodeikticus), this protein is ATP phosphoribosyltransferase.